Here is a 219-residue protein sequence, read N- to C-terminus: Probable GTP-binding protein EngB (219 aa).

Residues 24-207 (VQPEIAFAGR…HELIESWLRP (184 aa)) form the EngB-type G domain. GTP-binding positions include 32 to 39 (GRSNAGKS), 59 to 63 (GRTQH), 81 to 84 (DLPG), 148 to 151 (TKCD), and 186 to 188 (FSA). Serine 39 and threonine 61 together coordinate Mg(2+).

It belongs to the TRAFAC class TrmE-Era-EngA-EngB-Septin-like GTPase superfamily. EngB GTPase family. Mg(2+) serves as cofactor.

In terms of biological role, necessary for normal cell division and for the maintenance of normal septation. The polypeptide is Probable GTP-binding protein EngB (Burkholderia ambifaria (strain ATCC BAA-244 / DSM 16087 / CCUG 44356 / LMG 19182 / AMMD) (Burkholderia cepacia (strain AMMD))).